The primary structure comprises 463 residues: Histone acetyltransferase mst1 (463 aa).

One can recognise a Tudor-knot domain in the interval 22–74; the sequence is VYKSKVFAFKDGEYRKAEILMIQKRTRGVVYYVHYNDYNKRLDEWITIDNIDL. The interval 76-145 is disordered; that stretch reads KGIEYPPPEK…GSNAGNESLP (70 aa). The segment covering 87-99 has biased composition (basic residues); sequence KKAHGKGKSSKRP. The segment covering 111–121 has biased composition (low complexity); sequence PSKTEPSTPST. The MYST-type HAT domain occupies 179-451; it reads ARIRNINKIC…NGDLLADWQP (273 aa). A C2HC MYST-type zinc finger spans residues 212–237; the sequence is VYICSFCFCYYGSERQFQRHREKCTL. The ESA1-RPD3 motif signature appears at 262–283; it reads RTWCRNICLLSKLFLDHKMLYY. Residue lysine 279 is modified to N6-acetyllysine; by autocatalysis. Acetyl-CoA is bound by residues 320 to 324 and 329 to 335; these read ACILT and QRHGYGK. Catalysis depends on glutamate 355, which acts as the Proton donor/acceptor. Serine 359 provides a ligand contact to acetyl-CoA.

This sequence belongs to the MYST (SAS/MOZ) family. Component of the NuA4 histone acetyltransferase complex. Interacts with arp4. In terms of processing, autoacetylation at Lys-279 is required for proper function.

It is found in the nucleus. The protein localises to the chromosome. The catalysed reaction is L-lysyl-[histone] + acetyl-CoA = N(6)-acetyl-L-lysyl-[histone] + CoA + H(+). The enzyme catalyses L-lysyl-[protein] + acetyl-CoA = N(6)-acetyl-L-lysyl-[protein] + CoA + H(+). It catalyses the reaction 2-hydroxyisobutanoyl-CoA + L-lysyl-[protein] = N(6)-(2-hydroxyisobutanoyl)-L-lysyl-[protein] + CoA + H(+). It carries out the reaction (2E)-butenoyl-CoA + L-lysyl-[protein] = N(6)-(2E)-butenoyl-L-lysyl-[protein] + CoA + H(+). Catalytic component of the NuA4 histone acetyltransferase (HAT) complex which is involved in epigenetic transcriptional activation of selected genes principally by acetylation of nucleosomal histones H4, H3, H2B, H2A and H2A variant H2A.Z. Acetylates histone H4 to form H4K5ac, H4K8ac, H4K12ac and H4K16ac, histone H3 to form H3K14ac, and histone H2A to form H2AK4ac and H2AK7ac. The NuA4 complex is involved in the DNA damage response and is required for chromosome segregation. The NuA4 complex plays a direct role in repair of DNA double-strand breaks (DSBs) through homologous recombination. Recruitment to promoters depends on H3K4me. Also acetylates non-histone proteins. In addition to protein acetyltransferase, can use different acyl-CoA substrates, such as 2-hydroxyisobutanoyl-CoA (2-hydroxyisobutyryl-CoA) or (2E)-butenoyl-CoA (crotonyl-CoA), and is able to mediate protein 2-hydroxyisobutyrylation and crotonylation, respectively. The chain is Histone acetyltransferase mst1 from Schizosaccharomyces pombe (strain 972 / ATCC 24843) (Fission yeast).